Consider the following 239-residue polypeptide: Ubiquinone biosynthesis O-methyltransferase (239 aa).

S-adenosyl-L-methionine-binding residues include R42, G62, D83, and M127.

The protein belongs to the methyltransferase superfamily. UbiG/COQ3 family.

The enzyme catalyses a 3-demethylubiquinol + S-adenosyl-L-methionine = a ubiquinol + S-adenosyl-L-homocysteine + H(+). It catalyses the reaction a 3-(all-trans-polyprenyl)benzene-1,2-diol + S-adenosyl-L-methionine = a 2-methoxy-6-(all-trans-polyprenyl)phenol + S-adenosyl-L-homocysteine + H(+). Its pathway is cofactor biosynthesis; ubiquinone biosynthesis. O-methyltransferase that catalyzes the 2 O-methylation steps in the ubiquinone biosynthetic pathway. This chain is Ubiquinone biosynthesis O-methyltransferase, found in Pectobacterium carotovorum subsp. carotovorum (strain PC1).